The following is a 231-amino-acid chain: LexA repressor (231 aa).

The segment at residues 31-51 (RAEIATEFGFRSANAAEEHLQ) is a DNA-binding region (H-T-H motif). Catalysis depends on for autocatalytic cleavage activity residues Ser148 and Lys185.

This sequence belongs to the peptidase S24 family. In terms of assembly, homodimer.

The catalysed reaction is Hydrolysis of Ala-|-Gly bond in repressor LexA.. Its function is as follows. Represses a number of genes involved in the response to DNA damage (SOS response), including recA and lexA. In the presence of single-stranded DNA, RecA interacts with LexA causing an autocatalytic cleavage which disrupts the DNA-binding part of LexA, leading to derepression of the SOS regulon and eventually DNA repair. This chain is LexA repressor, found in Leptothrix cholodnii (strain ATCC 51168 / LMG 8142 / SP-6) (Leptothrix discophora (strain SP-6)).